A 64-amino-acid polypeptide reads, in one-letter code: Beta-insect depressant toxin BmKIT4 (64 aa).

One can recognise an LCN-type CS-alpha/beta domain in the interval 1 to 61 (DGYIRGSNGC…TWKSESNTCG (61 aa)). 4 cysteine pairs are disulfide-bonded: cysteine 10–cysteine 60, cysteine 14–cysteine 35, cysteine 21–cysteine 42, and cysteine 25–cysteine 44. A Cysteine amide modification is found at cysteine 60.

It belongs to the long (4 C-C) scorpion toxin superfamily. Sodium channel inhibitor family. Beta subfamily. In terms of tissue distribution, expressed by the venom gland.

It is found in the secreted. Depressant insect beta-toxins cause a transient contraction paralysis followed by a slow flaccid paralysis. They bind voltage-independently at site-4 of sodium channels (Nav) and shift the voltage of activation toward more negative potentials thereby affecting sodium channel activation and promoting spontaneous and repetitive firing. This toxin is active only on insects. The sequence is that of Beta-insect depressant toxin BmKIT4 from Olivierus martensii (Manchurian scorpion).